The primary structure comprises 916 residues: Rab3 GTPase-activating protein catalytic subunit (916 aa).

The disordered stretch occupies residues 530–574 (NSKRKSEGMVGKASSEEEEDEDDDEGEFFDCDDLTAGAGSPTKAV). 2 positions are modified to phosphoserine: Ser543 and Ser544. A compositionally biased stretch (acidic residues) spans 545–562 (EEEEDEDDDEGEFFDCDD).

It belongs to the Rab3-GAP catalytic subunit family. As to quaternary structure, the Rab3 GTPase-activating complex is a heterodimer composed of Rab3GAP1 and Rab3-GAP.

The protein resides in the cytoplasm. Catalytic subunit of the Rab3 GTPase-activating (Rab3GAP) complex composed of Rab3-GAP and Rab3GAP1, which has both GTPase-activating protein (GAP) activity towards Rab3, and guanine nucleotide exchange factor (GEF) activity towards Rab18. As part of the Rab3GAP complex, required for the rapid induction and sustained expression of synaptic homeostasis at the neuromuscular junction (NMJ). Also participates in the regulation of autophagy in tissues such as larval fat cells and adult muscles. The Rab3GAP complex, acts as a GAP for Rab3 by converting active Rab3-GTP to the inactive form Rab3-GDP. At the neuromuscular junction (NMJ), forms a presynaptic signaling mechanism with Rab3 that regulates progression of synaptic homeostasis at a late stage of vesicle release. Within this mechanism Rab3-GTP acts, directly or indirectly, to inhibit the progression of synaptic homeostasis, and Rab3-GAP functions to inactivate this action of Rab3-GTP. The Rab3GAP complex, acts as a GEF for Rab18 by promoting the conversion of inactive Rab18-GDP to the active form Rab18-GTP. Regulates autophagy as part of a Rab3GAP-Rab18 module. Once Rab18 is activated by the GEF Rab3GAP complex, the Rab3GAP-Rab18 module localizes to autophagosomes, and regulates autolysosome formation and maturation together with the Rab18 interacting effector, the PI3K/Vps34 Complex I. This chain is Rab3 GTPase-activating protein catalytic subunit, found in Drosophila melanogaster (Fruit fly).